Here is a 193-residue protein sequence, read N- to C-terminus: Peptide deformylase 2 (193 aa).

Fe cation-binding residues include C100 and H142. The active site involves E143. Fe cation is bound at residue H146.

It belongs to the polypeptide deformylase family. It depends on Fe(2+) as a cofactor.

The catalysed reaction is N-terminal N-formyl-L-methionyl-[peptide] + H2O = N-terminal L-methionyl-[peptide] + formate. Its function is as follows. Removes the formyl group from the N-terminal Met of newly synthesized proteins. Requires at least a dipeptide for an efficient rate of reaction. N-terminal L-methionine is a prerequisite for activity but the enzyme has broad specificity at other positions. The chain is Peptide deformylase 2 from Corynebacterium efficiens (strain DSM 44549 / YS-314 / AJ 12310 / JCM 11189 / NBRC 100395).